Consider the following 700-residue polypeptide: Elongation factor G (700 aa).

In terms of domain architecture, tr-type G spans 8 to 290 (ERYRNIGISA…GVIDFMPSPI (283 aa)). Residues 17-24 (AHIDAGKT), 88-92 (DTPGH), and 142-145 (NKMD) contribute to the GTP site.

The protein belongs to the TRAFAC class translation factor GTPase superfamily. Classic translation factor GTPase family. EF-G/EF-2 subfamily.

It is found in the cytoplasm. Functionally, catalyzes the GTP-dependent ribosomal translocation step during translation elongation. During this step, the ribosome changes from the pre-translocational (PRE) to the post-translocational (POST) state as the newly formed A-site-bound peptidyl-tRNA and P-site-bound deacylated tRNA move to the P and E sites, respectively. Catalyzes the coordinated movement of the two tRNA molecules, the mRNA and conformational changes in the ribosome. This Methylibium petroleiphilum (strain ATCC BAA-1232 / LMG 22953 / PM1) protein is Elongation factor G.